The following is a 281-amino-acid chain: Acetyl-coenzyme A carboxylase carboxyl transferase subunit beta (281 aa).

The segment at 1–23 is disordered; the sequence is MAWFKREKKGISTSTEEKKEAPD. In terms of domain architecture, CoA carboxyltransferase N-terminal spans 25–281; that stretch reads LWNKCPNCKK…LAAFLKMMKN (257 aa). C29, C32, C48, and C51 together coordinate Zn(2+). The C4-type zinc finger occupies 29-51; sequence CPNCKKALHSADLLENKYVCQYC.

Belongs to the AccD/PCCB family. Acetyl-CoA carboxylase is a heterohexamer composed of biotin carboxyl carrier protein (AccB), biotin carboxylase (AccC) and two subunits each of ACCase subunit alpha (AccA) and ACCase subunit beta (AccD). Requires Zn(2+) as cofactor.

The protein resides in the cytoplasm. It catalyses the reaction N(6)-carboxybiotinyl-L-lysyl-[protein] + acetyl-CoA = N(6)-biotinyl-L-lysyl-[protein] + malonyl-CoA. It functions in the pathway lipid metabolism; malonyl-CoA biosynthesis; malonyl-CoA from acetyl-CoA: step 1/1. In terms of biological role, component of the acetyl coenzyme A carboxylase (ACC) complex. Biotin carboxylase (BC) catalyzes the carboxylation of biotin on its carrier protein (BCCP) and then the CO(2) group is transferred by the transcarboxylase to acetyl-CoA to form malonyl-CoA. The sequence is that of Acetyl-coenzyme A carboxylase carboxyl transferase subunit beta from Pedobacter heparinus (strain ATCC 13125 / DSM 2366 / CIP 104194 / JCM 7457 / NBRC 12017 / NCIMB 9290 / NRRL B-14731 / HIM 762-3).